The following is a 214-amino-acid chain: 3-isopropylmalate dehydratase small subunit (214 aa).

Belongs to the LeuD family. LeuD type 1 subfamily. In terms of assembly, heterodimer of LeuC and LeuD.

The enzyme catalyses (2R,3S)-3-isopropylmalate = (2S)-2-isopropylmalate. It participates in amino-acid biosynthesis; L-leucine biosynthesis; L-leucine from 3-methyl-2-oxobutanoate: step 2/4. In terms of biological role, catalyzes the isomerization between 2-isopropylmalate and 3-isopropylmalate, via the formation of 2-isopropylmaleate. In Pseudomonas fluorescens (strain ATCC BAA-477 / NRRL B-23932 / Pf-5), this protein is 3-isopropylmalate dehydratase small subunit.